The primary structure comprises 411 residues: Heparan-sulfate 6-O-sulfotransferase 1 (411 aa).

The Cytoplasmic segment spans residues 11–17; the sequence is MVERASK. The helical; Signal-anchor for type II membrane protein transmembrane segment at 18-37 threads the bilayer; that stretch reads FVLVVAGSVCFMLILYQYAG. Over 38–411 the chain is Lumenal; the sequence is PGLSLGAPGG…DYMSHIIEKW (374 aa). Position 93–101 (93–101) interacts with 3'-phosphoadenylyl sulfate; that stretch reads HIQKTGGTT. Substrate-binding positions include 123–124, Arg-140, Trp-145, and His-150; that span reads KK. His-150 functions as the Proton acceptor in the catalytic mechanism. Residues Arg-185 and Ser-193 each coordinate 3'-phosphoadenylyl sulfate. Substrate-binding residues include His-197 and Trp-204. Asn-264 carries an N-linked (GlcNAc...) asparagine glycan. A 3'-phosphoadenylyl sulfate-binding site is contributed by 317 to 319; that stretch reads MQY. N-linked (GlcNAc...) asparagine glycosylation occurs at Asn-320. 323 to 324 contacts 3'-phosphoadenylyl sulfate; sequence RA. Positions 352–387 form a coiled coil; sequence KDLFQQRYQYKRQLERREQRLRSREERLLHRAKEAL.

The protein belongs to the sulfotransferase 6 family. In terms of processing, N-glycosylated. As to expression, expressed in fetal brain.

It is found in the membrane. The catalysed reaction is alpha-D-glucosaminyl-[heparan sulfate](n) + 3'-phosphoadenylyl sulfate = 6-sulfo-alpha-D-glucosaminyl-[heparan sulfate](n) + adenosine 3',5'-bisphosphate + H(+). 6-O-sulfation enzyme which catalyzes the transfer of sulfate from 3'-phosphoadenosine 5'-phosphosulfate (PAPS) to position 6 of the N-sulfoglucosamine residue (GlcNS) of heparan sulfate. Critical for normal neuronal development where it may play a role in neuron branching. May also play a role in limb development. May prefer iduronic acid. The polypeptide is Heparan-sulfate 6-O-sulfotransferase 1 (Homo sapiens (Human)).